An 83-amino-acid chain; its full sequence is ATP synthase subunit c (83 aa).

2 helical membrane passes run 10–30 and 52–72; these read IAVA…FGLL and MFIV…IALY.

Belongs to the ATPase C chain family. In terms of assembly, F-type ATPases have 2 components, F(1) - the catalytic core - and F(0) - the membrane proton channel. F(1) has five subunits: alpha(3), beta(3), gamma(1), delta(1), epsilon(1). F(0) has three main subunits: a(1), b(2) and c(10-14). The alpha and beta chains form an alternating ring which encloses part of the gamma chain. F(1) is attached to F(0) by a central stalk formed by the gamma and epsilon chains, while a peripheral stalk is formed by the delta and b chains.

Its subcellular location is the cell inner membrane. Functionally, f(1)F(0) ATP synthase produces ATP from ADP in the presence of a proton or sodium gradient. F-type ATPases consist of two structural domains, F(1) containing the extramembraneous catalytic core and F(0) containing the membrane proton channel, linked together by a central stalk and a peripheral stalk. During catalysis, ATP synthesis in the catalytic domain of F(1) is coupled via a rotary mechanism of the central stalk subunits to proton translocation. Key component of the F(0) channel; it plays a direct role in translocation across the membrane. A homomeric c-ring of between 10-14 subunits forms the central stalk rotor element with the F(1) delta and epsilon subunits. The polypeptide is ATP synthase subunit c (Shewanella denitrificans (strain OS217 / ATCC BAA-1090 / DSM 15013)).